The sequence spans 254 residues: Probable pectate lyase E (254 aa).

A signal peptide spans 1–17; sequence MYQPLLLLPLLLTSAFA. Residue Asn175 is glycosylated (N-linked (GlcNAc...) asparagine). The disordered stretch occupies residues 228-254; sequence DNNKKEPAKKSSGPSNACKYKEPLASC.

It belongs to the polysaccharide lyase 3 family. Ca(2+) serves as cofactor.

It is found in the secreted. The catalysed reaction is Eliminative cleavage of (1-&gt;4)-alpha-D-galacturonan to give oligosaccharides with 4-deoxy-alpha-D-galact-4-enuronosyl groups at their non-reducing ends.. In terms of biological role, pectinolytic enzyme consist of four classes of enzymes: pectin lyase, polygalacturonase, pectin methylesterase and rhamnogalacturonase. Among pectinolytic enzymes, pectin lyase is the most important in depolymerization of pectin, since it cleaves internal glycosidic bonds of highly methylated pectins. Favors pectate, the anion, over pectin, the methyl ester. The chain is Probable pectate lyase E (plyE) from Aspergillus fumigatus (strain ATCC MYA-4609 / CBS 101355 / FGSC A1100 / Af293) (Neosartorya fumigata).